The chain runs to 326 residues: Ribose-phosphate pyrophosphokinase (326 aa).

Residues 45-47 and 104-105 contribute to the ATP site; these read NGE and RQ. 2 residues coordinate Mg(2+): histidine 138 and aspartate 178. Lysine 202 is an active-site residue. D-ribose 5-phosphate-binding positions include arginine 204, aspartate 230, and 234–238; that span reads DTGGT.

It belongs to the ribose-phosphate pyrophosphokinase family. Class I subfamily. Homohexamer. It depends on Mg(2+) as a cofactor.

The protein localises to the cytoplasm. It carries out the reaction D-ribose 5-phosphate + ATP = 5-phospho-alpha-D-ribose 1-diphosphate + AMP + H(+). The protein operates within metabolic intermediate biosynthesis; 5-phospho-alpha-D-ribose 1-diphosphate biosynthesis; 5-phospho-alpha-D-ribose 1-diphosphate from D-ribose 5-phosphate (route I): step 1/1. Its function is as follows. Involved in the biosynthesis of the central metabolite phospho-alpha-D-ribosyl-1-pyrophosphate (PRPP) via the transfer of pyrophosphoryl group from ATP to 1-hydroxyl of ribose-5-phosphate (Rib-5-P). The chain is Ribose-phosphate pyrophosphokinase from Mycobacterium bovis (strain ATCC BAA-935 / AF2122/97).